Reading from the N-terminus, the 420-residue chain is Tryptophan synthase beta chain (420 aa).

N6-(pyridoxal phosphate)lysine is present on Lys-99.

This sequence belongs to the TrpB family. Tetramer of two alpha and two beta chains. It depends on pyridoxal 5'-phosphate as a cofactor.

The catalysed reaction is (1S,2R)-1-C-(indol-3-yl)glycerol 3-phosphate + L-serine = D-glyceraldehyde 3-phosphate + L-tryptophan + H2O. Its pathway is amino-acid biosynthesis; L-tryptophan biosynthesis; L-tryptophan from chorismate: step 5/5. Functionally, the beta subunit is responsible for the synthesis of L-tryptophan from indole and L-serine. This chain is Tryptophan synthase beta chain, found in Helicobacter hepaticus (strain ATCC 51449 / 3B1).